The chain runs to 355 residues: MKIAVLLSGGVDSSIALYKVINKGYTNIKCYYLKIWLEDELSYIGNCPWQEDLNYVEAVCNKFNIPYEIINFQKEYYNKVVIYTIEELKNGNTPSPDIFCNQRIKFGAFFEKINEQYDLVVTGHYARIQIKEKKFFLKQAKDKIKDQSYFLSHLSQEQMSKLYFPLGTLFKSEVRQIAKSINLPNKDRKDSQGICFLGKIKYNEFIKYHLGEKKGNIVEKETGKIIGIHNGYWFFTVGQRRGIKLSNGPWFVIEKDLEKNIIYISHNENYLKQAKRKFLVHEIHWINGMPSDFENFKIKIRHGEKKYSCKLRLITNNLIEIFLNKKDHGISPGQFAIFYKNTECLGGAKIFKIIE.

ATP contacts are provided by residues 6–13 (LLSGGVDS) and Leu-33. Cys-100 (nucleophile) is an active-site residue. Cys-100 and Cys-195 are oxidised to a cystine. Residue Gly-123 participates in ATP binding. An interaction with tRNA region spans residues 145–147 (KDQ). Cys-195 serves as the catalytic Cysteine persulfide intermediate.

Belongs to the MnmA/TRMU family.

It localises to the cytoplasm. It carries out the reaction S-sulfanyl-L-cysteinyl-[protein] + uridine(34) in tRNA + AH2 + ATP = 2-thiouridine(34) in tRNA + L-cysteinyl-[protein] + A + AMP + diphosphate + H(+). Its function is as follows. Catalyzes the 2-thiolation of uridine at the wobble position (U34) of tRNA, leading to the formation of s(2)U34. The sequence is that of tRNA-specific 2-thiouridylase MnmA from Borrelia garinii subsp. bavariensis (strain ATCC BAA-2496 / DSM 23469 / PBi) (Borreliella bavariensis).